Consider the following 143-residue polypeptide: Large ribosomal subunit protein uL11 (143 aa).

This sequence belongs to the universal ribosomal protein uL11 family. Part of the ribosomal stalk of the 50S ribosomal subunit. Interacts with L10 and the large rRNA to form the base of the stalk. L10 forms an elongated spine to which L12 dimers bind in a sequential fashion forming a multimeric L10(L12)X complex. Post-translationally, one or more lysine residues are methylated.

Functionally, forms part of the ribosomal stalk which helps the ribosome interact with GTP-bound translation factors. This Verminephrobacter eiseniae (strain EF01-2) protein is Large ribosomal subunit protein uL11.